We begin with the raw amino-acid sequence, 62 residues long: UPF0434 protein Tola_2233 (62 aa).

It belongs to the UPF0434 family.

The protein is UPF0434 protein Tola_2233 of Tolumonas auensis (strain DSM 9187 / NBRC 110442 / TA 4).